Reading from the N-terminus, the 607-residue chain is All-trans-retinol 13,14-reductase (607 aa).

The signal sequence occupies residues 1-22 (MWFAVVAIFLALVAFLYRYVVG).

It belongs to the carotenoid/retinoid oxidoreductase family. CrtISO subfamily. It depends on NAD(+) as a cofactor. Requires NADP(+) as cofactor. FAD serves as cofactor.

It is found in the endoplasmic reticulum membrane. The catalysed reaction is all-trans-13,14-dihydroretinol + A = all-trans-retinol + AH2. Catalyzes the saturation of all-trans-retinol to all-trans-13,14-dihydroretinol. In addition, saturates the 7-8 double bond of all-trans-retinol to produce all-trans-7,8-dihydroretinol. Can also use vitamin A2 (all-trans-3,4-didehydroretinol) as a substrate, to produce all-trans-13,14-dihydro-3,4-didehydroretinol or all-trans-7,8-dihydro-3,4-didehydroretinol. May play a role in vitamin A metabolism. The protein is All-trans-retinol 13,14-reductase of Danio rerio (Zebrafish).